A 100-amino-acid chain; its full sequence is Protein RnfH (100 aa).

It belongs to the UPF0125 (RnfH) family.

This is Protein RnfH from Pseudomonas paraeruginosa (strain DSM 24068 / PA7) (Pseudomonas aeruginosa (strain PA7)).